Reading from the N-terminus, the 410-residue chain is uncharacterized protein (410 aa).

An N-terminal signal peptide occupies residues 1–41 (MVKSFRMKALIAGAAVAAAVSAGAVSDVPAAKVLQPTAAYA).

In terms of assembly, interacts with PcrA, Pdp, YclM, YkvL, YhcQ and YomL. The interaction with PcrA is not essential for cell viability or repair of UV-induced lesions.

The protein resides in the secreted. Its function is as follows. Increases the processivity of the PcrA helicase, but does not bind to DNA. This is an uncharacterized protein from Bacillus subtilis (strain 168).